A 799-amino-acid polypeptide reads, in one-letter code: Serine/threonine-protein kinase AfsK (799 aa).

Residues 16–271 form the Protein kinase domain; the sequence is FEVLGRLGAG…QAQLAPHLFG (256 aa). Residues 22 to 30 and K44 each bind ATP; that span reads LGAGGMGLV. S71 carries the phosphoserine; by autocatalysis modification. The active-site Proton acceptor is the D138. T168 carries the post-translational modification Phosphothreonine; by autocatalysis. Disordered regions lie at residues 295–343 and 393–426; these read RRNG…PAPP and LAAS…PAGW. Composition is skewed to pro residues over residues 325–343 and 411–421; these read HAPP…PAPP and VPAPAPAPPEA.

Belongs to the protein kinase superfamily. Ser/Thr protein kinase family. Interacts (via the N-terminal kinase domain) with KbpA; the interaction prevents autophosphorylation of AfsK. Autophosphorylated mainly on threonine residues. Some phosphorylation on serine residues. Autophosphorylation on Thr-168 is the major site enhancing kinase activity towards AfsR, and is regulated though interaction with KbpA.

The enzyme catalyses L-seryl-[protein] + ATP = O-phospho-L-seryl-[protein] + ADP + H(+). It carries out the reaction L-threonyl-[protein] + ATP = O-phospho-L-threonyl-[protein] + ADP + H(+). Functionally, involved in the regulation of secondary metabolism by phosphorylating, on both Ser and Thr, the AfsR global regulatory protein involved in the control of secondary metabolism. This chain is Serine/threonine-protein kinase AfsK (afsK), found in Streptomyces coelicolor (strain ATCC BAA-471 / A3(2) / M145).